Consider the following 115-residue polypeptide: Large ribosomal subunit protein P2 (115 aa).

The residue at position 1 (M1) is an N-acetylmethionine. Phosphoserine occurs at positions 17 and 19. At K21 the chain carries N6-acetyllysine; alternate. The residue at position 21 (K21) is an N6-succinyllysine; alternate. The span at 76–90 (APGSAAPAAGSAPAA) shows a compositional bias: low complexity. The disordered stretch occupies residues 76–115 (APGSAAPAAGSAPAAAEERKEEKKEESEESDDDMGFGLFD). S79 and S86 each carry phosphoserine. Basic and acidic residues predominate over residues 91–101 (AEERKEEKKEE). A phosphoserine mark is found at S102 and S105.

The protein belongs to the eukaryotic ribosomal protein P1/P2 family. Heterodimer with RPLP1 at the lateral ribosomal stalk of the large ribosomal subunit.

In terms of biological role, plays an important role in the elongation step of protein synthesis. This is Large ribosomal subunit protein P2 (RPLP2) from Equus caballus (Horse).